Reading from the N-terminus, the 212-residue chain is Adenylate kinase (212 aa).

Position 14–19 (14–19 (GSGKGT)) interacts with ATP. Residues 34 to 63 (STGDLFRKKISEDSQFAAQIQNYLSSGSYV) are NMP. Residues Thr-35, Arg-40, 61–63 (SYV), 89–92 (GYPR), and Gln-96 each bind AMP. Residues 126-163 (QRLFCQKCQKSYNLLLAKPKNELKCDLDSTDLITRNDD) form an LID region. Arg-127 provides a ligand contact to ATP. Residues Cys-130 and Cys-133 each contribute to the Zn(2+) site. 136 to 137 (SY) is an ATP binding site. Cys-150 and Asp-153 together coordinate Zn(2+). AMP contacts are provided by Arg-160 and Arg-171. Gln-199 is an ATP binding site.

It belongs to the adenylate kinase family. As to quaternary structure, monomer.

The protein resides in the cytoplasm. It catalyses the reaction AMP + ATP = 2 ADP. It functions in the pathway purine metabolism; AMP biosynthesis via salvage pathway; AMP from ADP: step 1/1. Its function is as follows. Catalyzes the reversible transfer of the terminal phosphate group between ATP and AMP. Plays an important role in cellular energy homeostasis and in adenine nucleotide metabolism. This Mesomycoplasma hyopneumoniae (strain J / ATCC 25934 / NCTC 10110) (Mycoplasma hyopneumoniae) protein is Adenylate kinase.